The sequence spans 80 residues: D-alanyl carrier protein (80 aa).

The Carrier domain maps to 1–77 (MDIQKQIVDI…KLVEQVKKLQ (77 aa)). An O-(pantetheine 4'-phosphoryl)serine modification is found at Ser35.

This sequence belongs to the DltC family. 4'-phosphopantetheine is transferred from CoA to a specific serine of apo-DCP.

The protein resides in the cytoplasm. The protein operates within cell wall biogenesis; lipoteichoic acid biosynthesis. Carrier protein involved in the D-alanylation of lipoteichoic acid (LTA). The loading of thioester-linked D-alanine onto DltC is catalyzed by D-alanine--D-alanyl carrier protein ligase DltA. The DltC-carried D-alanyl group is further transferred to cell membrane phosphatidylglycerol (PG) by forming an ester bond, probably catalyzed by DltD. D-alanylation of LTA plays an important role in modulating the properties of the cell wall in Gram-positive bacteria, influencing the net charge of the cell wall. This Lactobacillus delbrueckii subsp. bulgaricus (strain ATCC 11842 / DSM 20081 / BCRC 10696 / JCM 1002 / NBRC 13953 / NCIMB 11778 / NCTC 12712 / WDCM 00102 / Lb 14) protein is D-alanyl carrier protein.